We begin with the raw amino-acid sequence, 357 residues long: UDP-N-acetylglucosamine--N-acetylmuramyl-(pentapeptide) pyrophosphoryl-undecaprenol N-acetylglucosamine transferase (357 aa).

Residues 10-12 (TGG), N124, S189, I244, and Q289 contribute to the UDP-N-acetyl-alpha-D-glucosamine site.

This sequence belongs to the glycosyltransferase 28 family. MurG subfamily.

Its subcellular location is the cell membrane. The catalysed reaction is Mur2Ac(oyl-L-Ala-gamma-D-Glu-L-Lys-D-Ala-D-Ala)-di-trans,octa-cis-undecaprenyl diphosphate + UDP-N-acetyl-alpha-D-glucosamine = beta-D-GlcNAc-(1-&gt;4)-Mur2Ac(oyl-L-Ala-gamma-D-Glu-L-Lys-D-Ala-D-Ala)-di-trans,octa-cis-undecaprenyl diphosphate + UDP + H(+). Its pathway is cell wall biogenesis; peptidoglycan biosynthesis. Cell wall formation. Catalyzes the transfer of a GlcNAc subunit on undecaprenyl-pyrophosphoryl-MurNAc-pentapeptide (lipid intermediate I) to form undecaprenyl-pyrophosphoryl-MurNAc-(pentapeptide)GlcNAc (lipid intermediate II). The sequence is that of UDP-N-acetylglucosamine--N-acetylmuramyl-(pentapeptide) pyrophosphoryl-undecaprenol N-acetylglucosamine transferase from Lactococcus lactis subsp. cremoris (strain MG1363).